A 150-amino-acid chain; its full sequence is 3-hydroxyacyl-[acyl-carrier-protein] dehydratase FabZ (150 aa).

H57 is a catalytic residue.

The protein belongs to the thioester dehydratase family. FabZ subfamily.

It is found in the cytoplasm. It catalyses the reaction a (3R)-hydroxyacyl-[ACP] = a (2E)-enoyl-[ACP] + H2O. Involved in unsaturated fatty acids biosynthesis. Catalyzes the dehydration of short chain beta-hydroxyacyl-ACPs and long chain saturated and unsaturated beta-hydroxyacyl-ACPs. This Mannheimia succiniciproducens (strain KCTC 0769BP / MBEL55E) protein is 3-hydroxyacyl-[acyl-carrier-protein] dehydratase FabZ.